The primary structure comprises 940 residues: Isoleucine--tRNA ligase (940 aa).

Residues 58-68 (PYANGSIHIGH) carry the 'HIGH' region motif. Glu564 lines the L-isoleucyl-5'-AMP pocket. The 'KMSKS' region motif lies at 605-609 (KMSKS). Position 608 (Lys608) interacts with ATP. The Zn(2+) site is built by Cys903, Cys906, Cys923, and Cys926.

It belongs to the class-I aminoacyl-tRNA synthetase family. IleS type 1 subfamily. As to quaternary structure, monomer. The cofactor is Zn(2+).

Its subcellular location is the cytoplasm. The catalysed reaction is tRNA(Ile) + L-isoleucine + ATP = L-isoleucyl-tRNA(Ile) + AMP + diphosphate. In terms of biological role, catalyzes the attachment of isoleucine to tRNA(Ile). As IleRS can inadvertently accommodate and process structurally similar amino acids such as valine, to avoid such errors it has two additional distinct tRNA(Ile)-dependent editing activities. One activity is designated as 'pretransfer' editing and involves the hydrolysis of activated Val-AMP. The other activity is designated 'posttransfer' editing and involves deacylation of mischarged Val-tRNA(Ile). In Shewanella baltica (strain OS195), this protein is Isoleucine--tRNA ligase.